A 176-amino-acid chain; its full sequence is Sigma intracellular receptor 2 (176 aa).

At 1–9 (MGALAARRC) the chain is on the cytoplasmic side. Residues 10-30 (VEWLLGLYFVSHIPITLFIDL) form a helical membrane-spanning segment. The EXPERA domain occupies 10–158 (VEWLLGLYFV…PYLIIPLILL (149 aa)). Over 31-68 (QAVLPPELYPQEFSNLLRWYSKEFKDPLMQEPPVWFKS) the chain is Lumenal. The chain crosses the membrane as a helical span at residues 69-89 (FLLCELVFQLPFFPIAAYAFF). 2 residues coordinate cholesterol: Val75 and Gln77. Residues 90 to 99 (KGSCRWIRIP) lie on the Cytoplasmic side of the membrane. The chain crosses the membrane as a helical span at residues 100 to 120 (AIIYAAHTITTLIPILYTLLF). Topologically, residues 121–140 (EDFSKAVAFKGQRPESFRER) are lumenal. Residues 141–161 (LTLVGVYAPYLIIPLILLLFM) traverse the membrane as a helical segment. Residues 162-176 (LRNPYYKYEEKRKKK) are Cytoplasmic-facing. The ER retention motif signature appears at 172 to 176 (KRKKK).

The protein belongs to the TMEM97/sigma-2 receptor family. As to quaternary structure, homodimer. Interacts with NPC1; the interaction impairs NPC1-mediated cholesterol transport. Interacts with PGRMC1 and LDLR; the interaction increases LDL internalization. Interacts with histatin 1/HTN1; the interaction induces HTN1-stimulating wound healing. Interacts with TSPO.

The protein localises to the rough endoplasmic reticulum membrane. It localises to the nucleus membrane. Sigma-2 receptor which contributes to ameliorate dysfunctional cellular processes and slow degenerative progression by regulating cell functions including cholesterol biosynthesis/trafficking, membrane trafficking, autophagy, lipid membrane-bound protein trafficking, and receptor stabilization at the cell surface. Forms a ternary complex with PGRMC1 receptor and low density lipoprotein receptor/LDLR at the plasma membrane, which increases LDLR-mediated LDL cholesterol internalization. Decreases lysosomal sterol transporter NPC1 availability to the cell, probably through NPC1-binding, hence controlling lipid transport, including cholesterol and LBPA, outside of late endosome/lysosome. Binds regio- and stereoselective ligand 20(S)-hydroxycholesterol (20(S)-OHC) which enhances TMEM97-NPC1 interaction and decreases TMEM97-PGRMC1 and TMEM97-TSPO interactions, thereby linking OHC binding to cholesterol homeostasis. Also able to bind cholesterol. Binds histatin 1 (Hst 1)/HN1 salivary peptide at the ER membrane, which is critical for increasing mitochondria-ER contacts and stimulating Hst1 wound healing properties. May alter the activity of some cytochrome P450 proteins. Although shows homologies with sterol isomerases (EXPERA domain), not able to catalyze sterol isomerization. However, may act as sensors of these molecules. Acts as a quality control factor in the ER, promoting the proteolytic degradation of nonproductive and extramitochondrial precursor proteins in the ER membrane thus removing them from the ER surface. The protein is Sigma intracellular receptor 2 of Mus musculus (Mouse).